Reading from the N-terminus, the 367-residue chain is Glutamate 5-kinase (367 aa).

Lys10 serves as a coordination point for ATP. Substrate is bound by residues Ser50, Asp137, and Asn149. ATP-binding positions include 169–170 (TD) and 211–217 (TGGMATK). The 79-residue stretch at 275–353 (AGEITVDDGA…QQISEILGYE (79 aa)) folds into the PUA domain.

It belongs to the glutamate 5-kinase family.

The protein resides in the cytoplasm. It catalyses the reaction L-glutamate + ATP = L-glutamyl 5-phosphate + ADP. Its pathway is amino-acid biosynthesis; L-proline biosynthesis; L-glutamate 5-semialdehyde from L-glutamate: step 1/2. Catalyzes the transfer of a phosphate group to glutamate to form L-glutamate 5-phosphate. The protein is Glutamate 5-kinase of Yersinia pseudotuberculosis serotype IB (strain PB1/+).